Consider the following 552-residue polypeptide: Beta-hexosaminidase A (552 aa).

The signal sequence occupies residues 1–15; that stretch reads MRLIVLSLLFTSTLA. Residue N44 is glycosylated (N-linked (GlcNAc...) asparagine). Residue E322 is the Proton donor of the active site. Residues N348, N409, and N457 are each glycosylated (N-linked (GlcNAc...) asparagine).

It belongs to the glycosyl hydrolase 20 family.

Its subcellular location is the lysosome. The enzyme catalyses Hydrolysis of terminal non-reducing N-acetyl-D-hexosamine residues in N-acetyl-beta-D-hexosaminides.. Functionally, responsible for the degradation of GM2 gangliosides, and a variety of other molecules containing terminal N-acetyl hexosamines. Degrades chitotriose. This chain is Beta-hexosaminidase A, found in Caenorhabditis briggsae.